The sequence spans 1782 residues: Vitellogenin (1782 aa).

Residues 1-15 (MKLFVLAAIIAAVSS) form the signal peptide. Positions 34 to 812 (WQVGKQYRYE…SEDSLLPKDF (779 aa)) constitute a Vitellogenin domain. Disordered stretches follow at residues 333–367 (HYESSSSSSSSESHEFNFPEQHEHPHQSNQRSRRS) and 379–406 (VLKKRNSESSSGSSSSSADSSSTYINDD). Basic and acidic residues predominate over residues 344–358 (ESHEFNFPEQHEHPH). Positions 386–400 (ESSSGSSSSSADSSS) are enriched in low complexity. Asparagine 569, asparagine 587, asparagine 1357, asparagine 1463, and asparagine 1596 each carry an N-linked (GlcNAc...) asparagine glycan. Residues 1449-1638 (PYCSIDGTRI…AYSLNEENSD (190 aa)) form the VWFD domain. Cysteine 1451 and cysteine 1602 are disulfide-bonded.

As to quaternary structure, heterotetramer of two heavy and two light chains. In terms of processing, glycosylated and phosphorylated. As to expression, detected in oocytes (at protein level). Produced by the fat body, where it is cleaved before being secreted into hemolymph. Sequestered then by a single class of receptor mediated endocytosis in the ovary.

It is found in the secreted. The protein localises to the cytoplasm. Its subcellular location is the cytoplasmic granule. In terms of biological role, precursor of the egg-yolk proteins that are sources of nutrients during embryonic development. The polypeptide is Vitellogenin (VG) (Bombyx mori (Silk moth)).